A 130-amino-acid chain; its full sequence is ATP synthase epsilon chain (130 aa).

Belongs to the ATPase epsilon chain family. As to quaternary structure, F-type ATPases have 2 components, CF(1) - the catalytic core - and CF(0) - the membrane proton channel. CF(1) has five subunits: alpha(3), beta(3), gamma(1), delta(1), epsilon(1). CF(0) has three main subunits: a, b and c.

The protein resides in the cell inner membrane. Functionally, produces ATP from ADP in the presence of a proton gradient across the membrane. This Pelagibacter ubique (strain HTCC1062) protein is ATP synthase epsilon chain.